The following is a 615-amino-acid chain: DNA mismatch repair protein MutL (615 aa).

The interval 363–397 is disordered; sequence FAEPAAREPVAPRYTPAPASGSRPAAPWPNAQPGY. A compositionally biased stretch (low complexity) spans 364-391; it reads AEPAAREPVAPRYTPAPASGSRPAAPWP.

This sequence belongs to the DNA mismatch repair MutL/HexB family.

This protein is involved in the repair of mismatches in DNA. It is required for dam-dependent methyl-directed DNA mismatch repair. May act as a 'molecular matchmaker', a protein that promotes the formation of a stable complex between two or more DNA-binding proteins in an ATP-dependent manner without itself being part of a final effector complex. The sequence is that of DNA mismatch repair protein MutL from Escherichia coli (strain ATCC 8739 / DSM 1576 / NBRC 3972 / NCIMB 8545 / WDCM 00012 / Crooks).